Reading from the N-terminus, the 758-residue chain is General transcription and DNA repair factor IIH helicase subunit XPD (758 aa).

Positions 7–285 (DVTVYFPYDN…TDAGRLRAEY (279 aa)) constitute a Helicase ATP-binding domain. Position 42 to 49 (42 to 49 (MPTGTGKT)) interacts with ATP. Residues Cys116, Cys134, Cys155, and Cys190 each coordinate [4Fe-4S] cluster. The DEAH box signature appears at 234–238 (DEAHN).

It belongs to the helicase family. RAD3/XPD subfamily. As to quaternary structure, component of the 7-subunit TFIIH core complex composed of XPB, XPD, TFB1/GTF2H1, GTF2H2/P44, TFB4/GTF2H3, TFB2/GTF2H4 and TFB5/GTF2H5, which is active in NER. The core complex associates with the 3-subunit CDK-activating kinase (CAK) module composed of CYCH1/cyclin H1, CDKD and MAT1/At4g30820 to form the 10-subunit holoenzyme (holo-TFIIH) active in transcription. Interacts with GTF2H2/p44. Requires [4Fe-4S] cluster as cofactor. Expressed at low levels in all tissues.

The protein resides in the nucleus. It carries out the reaction Couples ATP hydrolysis with the unwinding of duplex DNA at the replication fork by translocating in the 5'-3' direction. This creates two antiparallel DNA single strands (ssDNA). The leading ssDNA polymer is the template for DNA polymerase III holoenzyme which synthesizes a continuous strand.. It catalyses the reaction ATP + H2O = ADP + phosphate + H(+). Functionally, ATP-dependent 5'-3' DNA helicase, component of the general transcription and DNA repair factor IIH (TFIIH) core complex, which is involved in general and transcription-coupled nucleotide excision repair (NER) of damaged DNA and, when complexed to CDK-activating kinase (CAK), involved in transcription by RNA polymerase II. In NER, TFIIH acts by opening DNA around the lesion to allow the excision of the damaged oligonucleotide and its replacement by a new DNA fragment. The ATP-dependent helicase activity of XPD is required for DNA opening. In transcription, TFIIH has an essential role in transcription initiation. When the pre-initiation complex (PIC) has been established, TFIIH is required for promoter opening and promoter escape. Phosphorylation of the C-terminal tail (CTD) of the largest subunit of RNA polymerase II by the kinase module CAK controls the initiation of transcription. XPD acts by forming a bridge between CAK and the core-TFIIH complex. Essential during plant growth. May negatively regulate a common response program mediated by UV damage and heat stress, that leads to tissue death and reduced chloroplast function. The chain is General transcription and DNA repair factor IIH helicase subunit XPD from Arabidopsis thaliana (Mouse-ear cress).